A 432-amino-acid polypeptide reads, in one-letter code: Histidinol dehydrogenase (432 aa).

NAD(+)-binding residues include Y130, Q191, and N214. Substrate is bound by residues S237, Q259, and H262. 2 residues coordinate Zn(2+): Q259 and H262. Catalysis depends on proton acceptor residues E327 and H328. 4 residues coordinate substrate: H328, D361, E415, and H420. D361 serves as a coordination point for Zn(2+). H420 is a binding site for Zn(2+).

It belongs to the histidinol dehydrogenase family. Zn(2+) is required as a cofactor.

The catalysed reaction is L-histidinol + 2 NAD(+) + H2O = L-histidine + 2 NADH + 3 H(+). It functions in the pathway amino-acid biosynthesis; L-histidine biosynthesis; L-histidine from 5-phospho-alpha-D-ribose 1-diphosphate: step 9/9. Its function is as follows. Catalyzes the sequential NAD-dependent oxidations of L-histidinol to L-histidinaldehyde and then to L-histidine. This is Histidinol dehydrogenase from Agrobacterium fabrum (strain C58 / ATCC 33970) (Agrobacterium tumefaciens (strain C58)).